Here is an 878-residue protein sequence, read N- to C-terminus: Alanine--tRNA ligase (878 aa).

Zn(2+) contacts are provided by His-570, His-574, Cys-672, and His-676. Positions 844-864 are disordered; the sequence is GGKGGGGRPDMAQAGGPDASA. Positions 855–864 are enriched in low complexity; the sequence is AQAGGPDASA.

The protein belongs to the class-II aminoacyl-tRNA synthetase family. Requires Zn(2+) as cofactor.

The protein resides in the cytoplasm. The catalysed reaction is tRNA(Ala) + L-alanine + ATP = L-alanyl-tRNA(Ala) + AMP + diphosphate. In terms of biological role, catalyzes the attachment of alanine to tRNA(Ala) in a two-step reaction: alanine is first activated by ATP to form Ala-AMP and then transferred to the acceptor end of tRNA(Ala). Also edits incorrectly charged Ser-tRNA(Ala) and Gly-tRNA(Ala) via its editing domain. In Paramagnetospirillum magneticum (strain ATCC 700264 / AMB-1) (Magnetospirillum magneticum), this protein is Alanine--tRNA ligase.